The primary structure comprises 349 residues: 5-deoxyribose 1-phosphate isomerase (349 aa).

Substrate contacts are provided by residues 49-51 (RGA), Arg-92, and Gln-199. The Proton donor role is filled by Asp-240. 250-251 (NK) contacts substrate.

Belongs to the EIF-2B alpha/beta/delta subunits family. DrdI subfamily.

The enzyme catalyses 5-deoxy-alpha-D-ribose 1-phosphate = 5-deoxy-D-ribulose 1-phosphate. The protein operates within carbohydrate degradation. Functionally, catalyzes the isomerization of 5-deoxy-alpha-D-ribose 1-phosphate to 5-deoxy-D-ribulose 1-phosphate, as part of a 5-deoxyribose salvage pathway that recycles this toxic radical SAM enzyme by-product to mainstream metabolites. In Clostridium botulinum (strain Okra / Type B1), this protein is 5-deoxyribose 1-phosphate isomerase.